Reading from the N-terminus, the 284-residue chain is Nucleotide-binding protein VSAL_I0495 (284 aa).

8–15 (GNSGAGKS) provides a ligand contact to ATP. 56-59 (DIRN) is a binding site for GTP.

This sequence belongs to the RapZ-like family.

Displays ATPase and GTPase activities. This chain is Nucleotide-binding protein VSAL_I0495, found in Aliivibrio salmonicida (strain LFI1238) (Vibrio salmonicida (strain LFI1238)).